A 106-amino-acid polypeptide reads, in one-letter code: Large ribosomal subunit protein bL21 (106 aa).

The protein belongs to the bacterial ribosomal protein bL21 family. As to quaternary structure, part of the 50S ribosomal subunit. Contacts protein L20.

Its function is as follows. This protein binds to 23S rRNA in the presence of protein L20. This Xylella fastidiosa (strain Temecula1 / ATCC 700964) protein is Large ribosomal subunit protein bL21.